The primary structure comprises 95 residues: Homeotic protein bicoid (95 aa).

Disordered regions lie at residues 1–29 (NLEPLKSHTVVGLDKSCDDGSSDDMSTGM) and 42–63 (GKPSAAQAQPQPPPPPLGMMHD).

This sequence belongs to the paired homeobox family. Bicoid subfamily.

The protein localises to the nucleus. Functionally, bicoid is polarity protein that provides positional cues for the development of head and thoracic segments. BCD regulates the expression of zygotic genes, possibly through its homeodomain, and inhibits the activity of other maternal gene products. The sequence is that of Homeotic protein bicoid (bcd) from Drosophila subobscura (Fruit fly).